The chain runs to 154 residues: MATFVQKPAEVEKKWILIDAEGLVVGRLASLIANRLRGKHKATYTPHVDDGDNVIVINAEKAVLTGKKYTDKKYYWHTGYPGGIKERTARQIIEGRFPERVIEKAVERMVPRGPLGRRQMKNLRVYAGSNHPHEAQQPTVLDVAKLNNKNTRSA.

It belongs to the universal ribosomal protein uL13 family. Part of the 50S ribosomal subunit.

Its function is as follows. This protein is one of the early assembly proteins of the 50S ribosomal subunit, although it is not seen to bind rRNA by itself. It is important during the early stages of 50S assembly. This chain is Large ribosomal subunit protein uL13, found in Sinorhizobium medicae (strain WSM419) (Ensifer medicae).